The sequence spans 95 residues: Co-chaperonin GroES (95 aa).

Belongs to the GroES chaperonin family. As to quaternary structure, heptamer of 7 subunits arranged in a ring. Interacts with the chaperonin GroEL.

It localises to the cytoplasm. In terms of biological role, together with the chaperonin GroEL, plays an essential role in assisting protein folding. The GroEL-GroES system forms a nano-cage that allows encapsulation of the non-native substrate proteins and provides a physical environment optimized to promote and accelerate protein folding. GroES binds to the apical surface of the GroEL ring, thereby capping the opening of the GroEL channel. This Neisseria meningitidis serogroup C (strain 053442) protein is Co-chaperonin GroES.